Consider the following 813-residue polypeptide: LPS-assembly protein LptD (813 aa).

An N-terminal signal peptide occupies residues 1 to 22 (MRRALRLLPLPLSIAICLPAMA).

Belongs to the LptD family. As to quaternary structure, component of the lipopolysaccharide transport and assembly complex. Interacts with LptE and LptA.

The protein resides in the cell outer membrane. Together with LptE, is involved in the assembly of lipopolysaccharide (LPS) at the surface of the outer membrane. The sequence is that of LPS-assembly protein LptD from Xanthomonas axonopodis pv. citri (strain 306).